A 228-amino-acid chain; its full sequence is Thermonuclease (228 aa).

The signal sequence occupies residues 1–23; that stretch reads MTEYLLSAGICMAIVSILLIGMA. The propeptide occupies 24–60; it reads ISNVSKGQYAKRFFFFATSCLVLTLVVVSSLSSSANA. A compositionally biased stretch (polar residues) spans 58 to 70; sequence ANASQTDNGVNRS. The disordered stretch occupies residues 58–83; it reads ANASQTDNGVNRSGSEDPTVYSATST. D100 lines the Ca(2+) pocket. R114 is a catalytic residue. Ca(2+) contacts are provided by D119 and T120. Active-site residues include E122 and R166.

It belongs to the thermonuclease family. Ca(2+) serves as cofactor.

It is found in the secreted. It catalyses the reaction Endonucleolytic cleavage to nucleoside 3'-phosphates and 3'-phosphooligonucleotide end-products.. Its function is as follows. Enzyme that catalyzes the hydrolysis of both DNA and RNA at the 5' position of the phosphodiester bond. The polypeptide is Thermonuclease (nuc) (Staphylococcus aureus (strain Mu50 / ATCC 700699)).